The following is a 105-amino-acid chain: Secreted effector protein PINE1 (105 aa).

The signal sequence occupies residues 1–21 (MKLSQPLSIFAILAASTVAVA).

Interacts with Arabidopsis thaliana PGIP1.

The protein resides in the secreted. Its function is as follows. Effector protein required for full virulence. Directly interacts with and functionally inactivates PG-inhibiting proteins (PGIPs). PGIPs are a defense mechanism of infected plants, that inhibit the plant pathogens secreted polygalacturonases (PGs) used to degrade the plant cell wall. Excerts its function by interacting with host PGIPs to negate their polygalacturonase-inhibiting function via enhanced dissociation of PGIPs from PGs. In Sclerotinia sclerotiorum (strain ATCC 18683 / 1980 / Ss-1) (White mold), this protein is Secreted effector protein PINE1.